The sequence spans 116 residues: Ribonuclease P protein component (116 aa).

It belongs to the RnpA family. As to quaternary structure, consists of a catalytic RNA component (M1 or rnpB) and a protein subunit.

It carries out the reaction Endonucleolytic cleavage of RNA, removing 5'-extranucleotides from tRNA precursor.. In terms of biological role, RNaseP catalyzes the removal of the 5'-leader sequence from pre-tRNA to produce the mature 5'-terminus. It can also cleave other RNA substrates such as 4.5S RNA. The protein component plays an auxiliary but essential role in vivo by binding to the 5'-leader sequence and broadening the substrate specificity of the ribozyme. This is Ribonuclease P protein component from Caldanaerobacter subterraneus subsp. tengcongensis (strain DSM 15242 / JCM 11007 / NBRC 100824 / MB4) (Thermoanaerobacter tengcongensis).